The primary structure comprises 450 residues: FAD-linked oxidoreductase ptmO (450 aa).

Residues 32–203 (PPELPYAIVR…TRFFIRTRPA (172 aa)) enclose the FAD-binding PCMH-type domain.

It belongs to the oxygen-dependent FAD-linked oxidoreductase family. FAD is required as a cofactor.

It participates in secondary metabolite biosynthesis. In terms of biological role, FAD-linked oxidoreductase; part of the gene cluster that mediates the biosynthesis of the indole diterpenes penitrems. The geranylgeranyl diphosphate (GGPP) synthase ptmG catalyzes the first step in penitrem biosynthesis via conversion of farnesyl pyrophosphate and isopentyl pyrophosphate into geranylgeranyl pyrophosphate (GGPP). Condensation of indole-3-glycerol phosphate with GGPP by the prenyl transferase ptmC then forms 3-geranylgeranylindole (3-GGI). Epoxidation by the FAD-dependent monooxygenase ptmM leads to a epoxidized-GGI that is substrate of the terpene cyclase ptmB for cyclization to yield paspaline. Paspaline is subsequently converted to 13-desoxypaxilline by the cytochrome P450 monooxygenase ptmP, the latter being then converted to paxilline by the cytochrome P450 monooxygenase ptmQ. Paxilline is converted to beta-paxitriol via C-10 ketoreduction by the short-chain dehydrogenase ptmH which can be monoprenylated at the C-20 by the indole diterpene prenyltransferase ptmD. A two-step elimination (acetylation and elimination) process performed by the O-acetyltransferase ptmV and ptmI leads to the production of the prenylated form of penijanthine. The FAD-linked oxidoreductase ptmO then converts the prenylated form of penijanthine into PC-M5 which is in turn transformed into PC-M4 by the aromatic dimethylallyltransferase ptmE. Five sequential oxidative transformations performed by the cytochrome P450 monooxygenases ptmK, ptmU, ptmL, ptmN and ptmJ yield the various penitrem compounds. PtmK, ptmU and ptmM are involved in the formation of the key bicyclic ring of penitrem C via the formation of the intermediates secopenitrem D and penitrem D. PtmL catalyzes the epoxidation of penitrem D and C to yield penitrem B and F, respectively. PtmJ catalyzes the last benzylic hydroxylation to convert penitrem B to prenitrem E and penitrem F to penitrem A. The polypeptide is FAD-linked oxidoreductase ptmO (Penicillium ochrochloron).